A 314-amino-acid chain; its full sequence is MTEQINQLSLSSIPIAPEGFKSGFVGIIGRPNVGKSTLMNQLVGQKIAITSPVSQTTRNRLRGILTTEEAQIIFVDTPGIHKPHHQLGKILVQNAEAAINAVDIILVVVDSSIEAGGGDRYIVELLENTETPVILGLNKSDQQPQNYQPIDESYLVLAQAHNWPVIKFSALTGEGLDNLQKTLINLLEPGPYYYPPDLVTDQPERFIMGELIREQILQQTRQEIPHSVAIVIEKVEETPTLTRVFAAINVERDSQKGIIIGKKGAMLKAIGTAAREQMQKLITGEVYLQLFVKVEPQWRQSSLRLSEFGYQIET.

The region spanning 21-189 is the Era-type G domain; sequence KSGFVGIIGR…QKTLINLLEP (169 aa). Residues 29–36 are G1; that stretch reads GRPNVGKS. GTP is bound at residue 29-36; the sequence is GRPNVGKS. The segment at 55–59 is G2; sequence QTTRN. A G3 region spans residues 76-79; that stretch reads DTPG. GTP-binding positions include 76 to 80 and 138 to 141; these read DTPGI and NKSD. The segment at 138-141 is G4; that stretch reads NKSD. Residues 168–170 are G5; sequence FSA. The KH type-2 domain occupies 212 to 296; sequence IREQILQQTR…YLQLFVKVEP (85 aa).

The protein belongs to the TRAFAC class TrmE-Era-EngA-EngB-Septin-like GTPase superfamily. Era GTPase family. In terms of assembly, monomer.

Its subcellular location is the cytoplasm. It is found in the cell inner membrane. In terms of biological role, an essential GTPase that binds both GDP and GTP, with rapid nucleotide exchange. Plays a role in 16S rRNA processing and 30S ribosomal subunit biogenesis and possibly also in cell cycle regulation and energy metabolism. The chain is GTPase Era from Rippkaea orientalis (strain PCC 8801 / RF-1) (Cyanothece sp. (strain PCC 8801)).